Consider the following 338-residue polypeptide: N-acetyl-gamma-glutamyl-phosphate reductase (338 aa).

Residue cysteine 148 is part of the active site.

Belongs to the NAGSA dehydrogenase family. Type 1 subfamily.

The protein resides in the cytoplasm. The catalysed reaction is N-acetyl-L-glutamate 5-semialdehyde + phosphate + NADP(+) = N-acetyl-L-glutamyl 5-phosphate + NADPH + H(+). It functions in the pathway amino-acid biosynthesis; L-arginine biosynthesis; N(2)-acetyl-L-ornithine from L-glutamate: step 3/4. Catalyzes the NADPH-dependent reduction of N-acetyl-5-glutamyl phosphate to yield N-acetyl-L-glutamate 5-semialdehyde. The polypeptide is N-acetyl-gamma-glutamyl-phosphate reductase (Leptospira borgpetersenii serovar Hardjo-bovis (strain JB197)).